A 218-amino-acid polypeptide reads, in one-letter code: Large ribosomal subunit protein eL14 (218 aa).

Lys79 carries the N6-acetyllysine modification. Lys85 is subject to N6-acetyllysine; alternate. N6-succinyllysine; alternate is present on Lys85. Lys124 is covalently cross-linked (Glycyl lysine isopeptide (Lys-Gly) (interchain with G-Cter in SUMO2)). Position 139 is a phosphoserine (Ser139). The tract at residues 159 to 218 (VPAKKATAAGKKAAAQKAPAQKAPAQKAAGQKAAQPPKAQKGQKPPAQKAPAPKASGKKA) is disordered. 6 repeat units span residues 174 to 178 (QKAPA), 179 to 183 (QKAPA), 184 to 188 (QKAAG), 189 to 193 (QKAAQ), 196 to 198 (KAQ), and 199 to 201 (KGQ). The tract at residues 174–193 (QKAPAQKAPAQKAAGQKAAQ) is 4 X 5 AA tandem repeats of Q-K-A-[PAS]-X. The 2 X 3 AA tandem repeats of K-[GA]-Q stretch occupies residues 196–201 (KAQKGQ). Lys207 is modified (N6-succinyllysine).

This sequence belongs to the eukaryotic ribosomal protein eL14 family. Component of the large ribosomal subunit.

Its subcellular location is the cytoplasm. In terms of biological role, component of the large ribosomal subunit. The ribosome is a large ribonucleoprotein complex responsible for the synthesis of proteins in the cell. The protein is Large ribosomal subunit protein eL14 (RPL14) of Oryctolagus cuniculus (Rabbit).